We begin with the raw amino-acid sequence, 202 residues long: P25 protein (202 aa).

Residues 7 to 195 (VAIVIYSTYG…EIARIQGETF (189 aa)) enclose the Flavodoxin-like domain. S181 carries the phosphoserine modification.

This sequence belongs to the WrbA family. In terms of assembly, homodimer.

Unknown. Target of pap1 transcription factor. Confers brefeldin A resistance in S.pombe. In Schizosaccharomyces pombe (strain 972 / ATCC 24843) (Fission yeast), this protein is P25 protein (obr1).